The sequence spans 191 residues: Lipid A acyltransferase PagP (191 aa).

The N-terminal stretch at 1 to 23 is a signal peptide; sequence MRLFYQRISLLISLCGFFSAAWA. Active-site residues include histidine 62, aspartate 105, and serine 106.

Belongs to the lipid A palmitoyltransferase family. As to quaternary structure, homodimer.

The protein resides in the cell outer membrane. The catalysed reaction is a lipid A + a 1,2-diacyl-sn-glycero-3-phosphocholine = a hepta-acyl lipid A + a 2-acyl-sn-glycero-3-phosphocholine. It carries out the reaction a lipid IVA + a 1,2-diacyl-sn-glycero-3-phosphocholine = a lipid IVB + a 2-acyl-sn-glycero-3-phosphocholine. It catalyses the reaction a lipid IIA + a 1,2-diacyl-sn-glycero-3-phosphocholine = a lipid IIB + a 2-acyl-sn-glycero-3-phosphocholine. Transfers a fatty acid residue from the sn-1 position of a phospholipid to the N-linked hydroxyfatty acid chain on the proximal unit of lipid A or its precursors. This is Lipid A acyltransferase PagP from Sodalis glossinidius (strain morsitans).